We begin with the raw amino-acid sequence, 448 residues long: Probable glycine dehydrogenase (decarboxylating) subunit 1 (448 aa).

Belongs to the GcvP family. N-terminal subunit subfamily. In terms of assembly, the glycine cleavage system is composed of four proteins: P, T, L and H. In this organism, the P 'protein' is a heterodimer of two subunits.

The catalysed reaction is N(6)-[(R)-lipoyl]-L-lysyl-[glycine-cleavage complex H protein] + glycine + H(+) = N(6)-[(R)-S(8)-aminomethyldihydrolipoyl]-L-lysyl-[glycine-cleavage complex H protein] + CO2. Functionally, the glycine cleavage system catalyzes the degradation of glycine. The P protein binds the alpha-amino group of glycine through its pyridoxal phosphate cofactor; CO(2) is released and the remaining methylamine moiety is then transferred to the lipoamide cofactor of the H protein. The polypeptide is Probable glycine dehydrogenase (decarboxylating) subunit 1 (Bacillus pumilus (strain SAFR-032)).